Consider the following 203-residue polypeptide: Urease accessory protein UreG (203 aa).

Glycine 14–threonine 21 contacts GTP.

This sequence belongs to the SIMIBI class G3E GTPase family. UreG subfamily. As to quaternary structure, homodimer. UreD, UreF and UreG form a complex that acts as a GTP-hydrolysis-dependent molecular chaperone, activating the urease apoprotein by helping to assemble the nickel containing metallocenter of UreC. The UreE protein probably delivers the nickel.

It localises to the cytoplasm. Functionally, facilitates the functional incorporation of the urease nickel metallocenter. This process requires GTP hydrolysis, probably effectuated by UreG. This chain is Urease accessory protein UreG, found in Rhizobium etli (strain CIAT 652).